Reading from the N-terminus, the 272-residue chain is Phosphatidylglycerol--prolipoprotein diacylglyceryl transferase (272 aa).

7 consecutive transmembrane segments (helical) span residues 17–37 (LQVH…WGLA), 55–75 (LVFY…VLFY), 90–110 (VWTG…AMLF), 125–145 (FIAP…FIGG), 174–194 (PSQI…LWWF), 202–222 (MAVS…MEFF), and 230–250 (GFIL…MLLI). R138 is an a 1,2-diacyl-sn-glycero-3-phospho-(1'-sn-glycerol) binding site.

It belongs to the Lgt family.

It localises to the cell inner membrane. The enzyme catalyses L-cysteinyl-[prolipoprotein] + a 1,2-diacyl-sn-glycero-3-phospho-(1'-sn-glycerol) = an S-1,2-diacyl-sn-glyceryl-L-cysteinyl-[prolipoprotein] + sn-glycerol 1-phosphate + H(+). The protein operates within protein modification; lipoprotein biosynthesis (diacylglyceryl transfer). Its function is as follows. Catalyzes the transfer of the diacylglyceryl group from phosphatidylglycerol to the sulfhydryl group of the N-terminal cysteine of a prolipoprotein, the first step in the formation of mature lipoproteins. The sequence is that of Phosphatidylglycerol--prolipoprotein diacylglyceryl transferase from Acinetobacter baumannii (strain SDF).